Consider the following 383-residue polypeptide: Succinyl-diaminopimelate desuccinylase (383 aa).

Histidine 74 contributes to the Zn(2+) binding site. Residue aspartate 76 is part of the active site. Aspartate 107 provides a ligand contact to Zn(2+). Glutamate 141 (proton acceptor) is an active-site residue. Zn(2+) is bound by residues glutamate 142, glutamate 170, and histidine 356.

It belongs to the peptidase M20A family. DapE subfamily. As to quaternary structure, homodimer. It depends on Zn(2+) as a cofactor. Co(2+) serves as cofactor.

It carries out the reaction N-succinyl-(2S,6S)-2,6-diaminopimelate + H2O = (2S,6S)-2,6-diaminopimelate + succinate. It participates in amino-acid biosynthesis; L-lysine biosynthesis via DAP pathway; LL-2,6-diaminopimelate from (S)-tetrahydrodipicolinate (succinylase route): step 3/3. Catalyzes the hydrolysis of N-succinyl-L,L-diaminopimelic acid (SDAP), forming succinate and LL-2,6-diaminopimelate (DAP), an intermediate involved in the bacterial biosynthesis of lysine and meso-diaminopimelic acid, an essential component of bacterial cell walls. The sequence is that of Succinyl-diaminopimelate desuccinylase from Cupriavidus taiwanensis (strain DSM 17343 / BCRC 17206 / CCUG 44338 / CIP 107171 / LMG 19424 / R1) (Ralstonia taiwanensis (strain LMG 19424)).